We begin with the raw amino-acid sequence, 212 residues long: MTELYCERKTLADLIAFASVEGLPVGEAAKRLCMSRQGAYKAVKALREAGYLSEGPVIKLTQKGRDALSIVLRNLLRYFDIASIKLVGRVVTGLGEGAFYMSLEGYRRAIERELGFTPYPGTLNIKLEPQSLAHRRYLDGLPGIHIPGFTNGMRTYGAVKAFRARLADVEGAVVMPERTHHPVDVIEFIAPVRVRDVLGLKDGDRVELEVYL.

The segment at 1-83 (MTELYCERKT…NLLRYFDIAS (83 aa)) is unknown. The interval 84–212 (IKLVGRVVTG…GDRVELEVYL (129 aa)) is riboflavin kinase. A CDP-binding site is contributed by 93–98 (GLGEGA). T122 and N124 together coordinate Mg(2+). FMN is bound by residues T179 and E187. 192 to 195 (VRVR) lines the CDP pocket.

Belongs to the archaeal riboflavin kinase family. The cofactor is Mg(2+).

The enzyme catalyses riboflavin + CTP = CDP + FMN + H(+). It functions in the pathway cofactor biosynthesis; FMN biosynthesis; FMN from riboflavin (CTP route): step 1/1. Its function is as follows. Catalyzes the CTP-dependent phosphorylation of riboflavin (vitamin B2) to form flavin mononucleotide (FMN). The protein is Riboflavin kinase (ribK) of Pyrobaculum calidifontis (strain DSM 21063 / JCM 11548 / VA1).